Consider the following 382-residue polypeptide: Succinyl-diaminopimelate desuccinylase (382 aa).

His-73 lines the Zn(2+) pocket. Asp-75 is a catalytic residue. Asp-106 contributes to the Zn(2+) binding site. The active-site Proton acceptor is the Glu-140. Residues Glu-141, Glu-169, and His-355 each coordinate Zn(2+).

Belongs to the peptidase M20A family. DapE subfamily. Homodimer. Zn(2+) is required as a cofactor. The cofactor is Co(2+).

It carries out the reaction N-succinyl-(2S,6S)-2,6-diaminopimelate + H2O = (2S,6S)-2,6-diaminopimelate + succinate. Its pathway is amino-acid biosynthesis; L-lysine biosynthesis via DAP pathway; LL-2,6-diaminopimelate from (S)-tetrahydrodipicolinate (succinylase route): step 3/3. Its function is as follows. Catalyzes the hydrolysis of N-succinyl-L,L-diaminopimelic acid (SDAP), forming succinate and LL-2,6-diaminopimelate (DAP), an intermediate involved in the bacterial biosynthesis of lysine and meso-diaminopimelic acid, an essential component of bacterial cell walls. This is Succinyl-diaminopimelate desuccinylase from Leptothrix cholodnii (strain ATCC 51168 / LMG 8142 / SP-6) (Leptothrix discophora (strain SP-6)).